The following is a 231-amino-acid chain: Orotidine 5'-phosphate decarboxylase (231 aa).

Substrate is bound by residues D11, K33, 60–69 (DLKFHDIPNT), T120, R181, Q190, G210, and R211. The Proton donor role is filled by K62.

It belongs to the OMP decarboxylase family. Type 1 subfamily. As to quaternary structure, homodimer.

It carries out the reaction orotidine 5'-phosphate + H(+) = UMP + CO2. Its pathway is pyrimidine metabolism; UMP biosynthesis via de novo pathway; UMP from orotate: step 2/2. Functionally, catalyzes the decarboxylation of orotidine 5'-monophosphate (OMP) to uridine 5'-monophosphate (UMP). This chain is Orotidine 5'-phosphate decarboxylase, found in Shewanella oneidensis (strain ATCC 700550 / JCM 31522 / CIP 106686 / LMG 19005 / NCIMB 14063 / MR-1).